Consider the following 21-residue polypeptide: Thanatin (21 aa).

The cysteines at positions 11 and 18 are disulfide-linked.

The protein resides in the secreted. Functionally, insect defense peptide with a broad spectrum of activity against Gram-positive and Gram-negative bacteria and fungi. No activity against S.aureus. Stops respiration in bacteria but does not permeabilize their inner membranes. The polypeptide is Thanatin (Podisus maculiventris (Spined soldier bug)).